The following is a 121-amino-acid chain: Large ribosomal subunit protein uL18 (121 aa).

It belongs to the universal ribosomal protein uL18 family. As to quaternary structure, part of the 50S ribosomal subunit; part of the 5S rRNA/L5/L18/L25 subcomplex. Contacts the 5S and 23S rRNAs.

Its function is as follows. This is one of the proteins that bind and probably mediate the attachment of the 5S RNA into the large ribosomal subunit, where it forms part of the central protuberance. The protein is Large ribosomal subunit protein uL18 of Moorella thermoacetica (strain ATCC 39073 / JCM 9320).